Reading from the N-terminus, the 660-residue chain is uncharacterized protein (660 aa).

Positions 220 to 239 (ADARGQAAAPPQAQAPAPPD) are disordered. Low complexity predominate over residues 222 to 239 (ARGQAAAPPQAQAPAPPD).

This is an uncharacterized protein from Callospermophilus lateralis (Golden-mantled ground squirrel).